The following is a 335-amino-acid chain: 3-hydroxyproline 2-epimerase (335 aa).

Cys-91 acts as the Proton acceptor in catalysis. Residues 92 to 93, Asp-251, and 256 to 257 contribute to the substrate site; these read GH and GS.

This sequence belongs to the proline racemase family.

It carries out the reaction trans-3-hydroxy-L-proline = cis-3-hydroxy-D-proline. The enzyme catalyses trans-4-hydroxy-L-proline = cis-4-hydroxy-D-proline. Catalyzes the epimerization of trans-3-hydroxy-L-proline (t3LHyp) to cis-3-hydroxy-D-proline (c3DHyp) in vitro. Can also catalyze the epimerization of trans-4-hydroxy-L-proline (t3LHyp) to cis-4-hydroxy-D-proline (c4DHyp), albeit with 3.6-fold lower efficiency. Displays no proline racemase activity. This chain is 3-hydroxyproline 2-epimerase, found in Burkholderia multivorans (strain ATCC 17616 / 249).